Reading from the N-terminus, the 237-residue chain is Uridylate kinase (237 aa).

11 to 14 is an ATP binding site; the sequence is KLSG. Residue Gly-53 participates in UMP binding. ATP-binding residues include Gly-54 and Arg-58. UMP-binding positions include Asp-73 and 134–141; that span reads TGNPFFTT. The ATP site is built by Thr-161, Tyr-167, and Asp-170.

It belongs to the UMP kinase family. In terms of assembly, homohexamer.

It is found in the cytoplasm. It catalyses the reaction UMP + ATP = UDP + ADP. Its pathway is pyrimidine metabolism; CTP biosynthesis via de novo pathway; UDP from UMP (UMPK route): step 1/1. Inhibited by UTP. Functionally, catalyzes the reversible phosphorylation of UMP to UDP. The polypeptide is Uridylate kinase (Burkholderia mallei (strain NCTC 10247)).